Consider the following 1654-residue polypeptide: Adapter protein unc-53 (1654 aa).

The Calponin-homology (CH) domain maps to 6–115 (VELIPIYTDW…LLFLLSTYKQ (110 aa)). Disordered stretches follow at residues 128-261 (EQLP…PQTQ), 274-364 (SKLA…GSAT), 381-440 (APII…SSDD), 480-501 (VKST…QPTI), 595-626 (AQVT…GYTS), 650-680 (AQNG…ISTD), 698-729 (SHFV…RAEQ), and 747-799 (AATS…SGQF). Positions 143 to 161 (PSPRVATSATASATNPNSN) are enriched in low complexity. Polar residues predominate over residues 162 to 174 (FPQMSTSRLQTPQ). Over residues 197–243 (PSSSTTSSNNTNSFRPSSRSSGNNNVGSTISTSAKSLESSSTYSSIS) the composition is skewed to low complexity. The segment covering 244–261 (NLNRPTSQLQKPSRPQTQ) has biased composition (polar residues). A compositionally biased stretch (low complexity) spans 310–327 (LKLKLFSSKNPSSSSNSP). Basic and acidic residues predominate over residues 388-397 (DSKRCSKSSE). The span at 407-429 (STSPTSSSTEGSLSMHSTSSKSS) shows a compositional bias: low complexity. The segment covering 595–607 (AQVTPPTKTSGNH) has biased composition (polar residues). Positions 705–722 (TSSSSKPRVPSRSSTSVD) are enriched in low complexity. 2 stretches are compositionally biased toward polar residues: residues 747–769 (AATS…SPHL) and 779–799 (SMHS…SGQF). Residues 962–994 (LNEKYEHAIRDMARDLECYKNTVDSLTKKQENY) are a coiled coil. A disordered region spans residues 1059–1083 (LESVASHRSSMSSSSKSSKQEKISL). The segment covering 1061–1083 (SVASHRSSMSSSSKSSKQEKISL) has biased composition (low complexity). Positions 1152 to 1184 (DRAREVDVLRETVNKLKTENKQLKKEVDKLTNG) form a coiled coil.

Belongs to the Nav/unc-53 family. Interacts with sem-5. Interacts with cmd-1 in the presence of Ca(2+).

Functionally, involved in the migration and outgrowth of muscles, axons and excretory canals. The polypeptide is Adapter protein unc-53 (unc-53) (Caenorhabditis elegans).